Consider the following 46-residue polypeptide: uncharacterized protein (46 aa).

This is an uncharacterized protein from Escherichia coli (Bacteriophage T4).